A 259-amino-acid chain; its full sequence is Small ribosomal subunit protein uS2 (259 aa).

The segment at 224 to 259 (GKQGEDDQQVAPAEDVAEEVSDESLQDLKNSVEGND) is disordered. Residues 238–248 (DVAEEVSDESL) are compositionally biased toward acidic residues. Polar residues predominate over residues 250-259 (DLKNSVEGND).

The protein belongs to the universal ribosomal protein uS2 family.

This Limosilactobacillus fermentum (strain NBRC 3956 / LMG 18251) (Lactobacillus fermentum) protein is Small ribosomal subunit protein uS2.